The primary structure comprises 92 residues: Large ribosomal subunit protein bL27 (92 aa).

The propeptide occupies 1–9 (MLVMNLQYF).

This sequence belongs to the bacterial ribosomal protein bL27 family. The N-terminus is cleaved by ribosomal processing cysteine protease Prp.

This is Large ribosomal subunit protein bL27 from Heliobacterium modesticaldum (strain ATCC 51547 / Ice1).